We begin with the raw amino-acid sequence, 588 residues long: ATP-dependent lipid A-core flippase (588 aa).

6 consecutive transmembrane segments (helical) span residues 23–43 (FWPV…IDAG), 56–76 (FITI…IGIT), 141–161 (DALT…TVMM), 162–182 (VICW…GIIV), 257–277 (LVIA…STVI), and 278–298 (TISA…IKPM). Residues 28–310 (LLGVLANILY…LTTLNATIQR (283 aa)) form the ABC transmembrane type-1 domain. The ABC transporter domain occupies 342 to 576 (IEFKHVYHAY…DGHYAQLYKV (235 aa)). 375 to 382 (GHSGSGKT) provides a ligand contact to ATP.

The protein belongs to the ABC transporter superfamily. Lipid exporter (TC 3.A.1.106) family. As to quaternary structure, homodimer.

Its subcellular location is the cell inner membrane. It catalyses the reaction ATP + H2O + lipid A-core oligosaccharideSide 1 = ADP + phosphate + lipid A-core oligosaccharideSide 2.. Functionally, involved in lipopolysaccharide (LPS) biosynthesis. Translocates lipid A-core from the inner to the outer leaflet of the inner membrane. Transmembrane domains (TMD) form a pore in the inner membrane and the ATP-binding domain (NBD) is responsible for energy generation. The polypeptide is ATP-dependent lipid A-core flippase (Legionella pneumophila subsp. pneumophila (strain Philadelphia 1 / ATCC 33152 / DSM 7513)).